The chain runs to 154 residues: Small ribosomal subunit protein uS15 (154 aa).

Residues 1 to 10 (MARMHSRRRG) are compositionally biased toward basic residues. The tract at residues 1–32 (MARMHSRRRGSSGSDRPTADEPPEWSEVDEDA) is disordered. Acidic residues predominate over residues 21–32 (EPPEWSEVDEDA).

This sequence belongs to the universal ribosomal protein uS15 family. In terms of assembly, part of the 30S ribosomal subunit.

This chain is Small ribosomal subunit protein uS15, found in Natronomonas pharaonis (strain ATCC 35678 / DSM 2160 / CIP 103997 / JCM 8858 / NBRC 14720 / NCIMB 2260 / Gabara) (Halobacterium pharaonis).